A 475-amino-acid chain; its full sequence is Ribulose bisphosphate carboxylase large chain (475 aa).

Residues 1 to 2 constitute a propeptide that is removed on maturation; the sequence is MS. Proline 3 carries the N-acetylproline modification. An N6,N6,N6-trimethyllysine modification is found at lysine 14. The substrate site is built by asparagine 123 and threonine 173. Catalysis depends on lysine 175, which acts as the Proton acceptor. Residue lysine 177 participates in substrate binding. Mg(2+) is bound by residues lysine 201, aspartate 203, and glutamate 204. An N6-carboxylysine modification is found at lysine 201. Histidine 294 acts as the Proton acceptor in catalysis. 3 residues coordinate substrate: arginine 295, histidine 327, and serine 379.

Belongs to the RuBisCO large chain family. Type I subfamily. As to quaternary structure, heterohexadecamer of 8 large chains and 8 small chains; disulfide-linked. The disulfide link is formed within the large subunit homodimers. Mg(2+) serves as cofactor. The disulfide bond which can form in the large chain dimeric partners within the hexadecamer appears to be associated with oxidative stress and protein turnover.

Its subcellular location is the plastid. The protein resides in the chloroplast. The catalysed reaction is 2 (2R)-3-phosphoglycerate + 2 H(+) = D-ribulose 1,5-bisphosphate + CO2 + H2O. It carries out the reaction D-ribulose 1,5-bisphosphate + O2 = 2-phosphoglycolate + (2R)-3-phosphoglycerate + 2 H(+). Functionally, ruBisCO catalyzes two reactions: the carboxylation of D-ribulose 1,5-bisphosphate, the primary event in carbon dioxide fixation, as well as the oxidative fragmentation of the pentose substrate in the photorespiration process. Both reactions occur simultaneously and in competition at the same active site. The chain is Ribulose bisphosphate carboxylase large chain from Carpinus caroliniana (American hornbeam).